The chain runs to 297 residues: MSEQISEQSEQNVYGASSPVPAGESSPSAASAPRTKVRTHHLQKWKAEGHKWAMLTVYDYSTARAFDDAGIPVLLVGDSAANVVYGYDTTVPISIDELIPLVRGVVRGAPHALVVADLPFGSYESGPSAALAAATRFMKEAGAHAVKLEGGERVAEQIACLTAAGIPVMAHIGFTPQSVNTLGGFRVQGRGDAAEQTIADAIAVAEAGAFSVVMEMVPAELATQITGKLTIPTIGIGAGPSCDGQVLVWQDMAGLSSGKAPRFVKRYADVGGELRRAAVQYAQDVAGGVFPAEEHCF.

A compositionally biased stretch (polar residues) spans Met1–Gly15. A disordered region spans residues Met1–His40. Low complexity predominate over residues Ala16 to Pro33. Mg(2+) is bound by residues Asp78 and Asp117. Residues Asp78–Ser79, Asp117, and Lys147 contribute to the 3-methyl-2-oxobutanoate site. Glu149 contributes to the Mg(2+) binding site. The Proton acceptor role is filled by Glu215.

This sequence belongs to the PanB family. In terms of assembly, homodecamer; pentamer of dimers. Mg(2+) is required as a cofactor.

The protein localises to the cytoplasm. The catalysed reaction is 3-methyl-2-oxobutanoate + (6R)-5,10-methylene-5,6,7,8-tetrahydrofolate + H2O = 2-dehydropantoate + (6S)-5,6,7,8-tetrahydrofolate. It participates in cofactor biosynthesis; (R)-pantothenate biosynthesis; (R)-pantoate from 3-methyl-2-oxobutanoate: step 1/2. Functionally, catalyzes the reversible reaction in which hydroxymethyl group from 5,10-methylenetetrahydrofolate is transferred onto alpha-ketoisovalerate to form ketopantoate. The chain is 3-methyl-2-oxobutanoate hydroxymethyltransferase from Mycobacterium marinum (strain ATCC BAA-535 / M).